A 177-amino-acid chain; its full sequence is Parathyroid hormone-related protein (177 aa).

The first 24 residues, 1–24, serve as a signal peptide directing secretion; sequence MLWRLVQQWSVAVFLLSYSVPSCG. Residues 25–34 constitute a propeptide that is removed on maturation; it reads RSVEELGRRL. An important for receptor binding region spans residues 57–68; the sequence is RFFLHHLIAEIH. The disordered stretch occupies residues 74-149; the sequence is ATSEVSPNSK…KRRTRSAWLT (76 aa). Positions 76–90 are enriched in polar residues; the sequence is SEVSPNSKPAPNTKN. The Nuclear localization signal motif lies at 108–129; it reads TNKVETYKEQPLKTPGKKKKSK. A compositionally biased stretch (basic and acidic residues) spans 109 to 118; sequence NKVETYKEQP. Positions 122–132 are enriched in basic residues; sequence PGKKKKSKPGK.

Belongs to the parathyroid hormone family. As to quaternary structure, PTHrP interacts with PTH1R (via N-terminal extracellular domain). There are several secretory forms, including osteostatin, arising from endoproteolytic cleavage of the initial translation product. Each of these secretory forms is believed to have one or more of its own receptors that mediates the normal paracrine, autocrine and endocrine actions.

It is found in the secreted. The protein resides in the cytoplasm. Its subcellular location is the nucleus. Its function is as follows. Neuroendocrine peptide which is a critical regulator of cellular and organ growth, development, migration, differentiation and survival and of epithelial calcium ion transport. Acts by binding to its receptor, PTH1R, activating G protein-coupled receptor signaling. Regulates endochondral bone development and epithelial-mesenchymal interactions during the formation of the mammary glands and teeth. Required for skeletal homeostasis. Promotes mammary mesenchyme differentiation and bud outgrowth by modulating mesenchymal cell responsiveness to BMPs. Up-regulates BMPR1A expression in the mammary mesenchyme and this increases the sensitivity of these cells to BMPs and allows them to respond to BMP4 in a paracrine and/or autocrine fashion. BMP4 signaling in the mesenchyme, in turn, triggers epithelial outgrowth and augments MSX2 expression, which causes the mammary mesenchyme to inhibit hair follicle formation within the nipple sheath. Functionally, potent inhibitor of osteoclastic bone resorption. The sequence is that of Parathyroid hormone-related protein (PTHLH) from Bos taurus (Bovine).